A 140-amino-acid chain; its full sequence is 3-hydroxyacyl-[acyl-carrier-protein] dehydratase FabZ (140 aa).

The active site involves His48.

It belongs to the thioester dehydratase family. FabZ subfamily.

The protein localises to the cytoplasm. It catalyses the reaction a (3R)-hydroxyacyl-[ACP] = a (2E)-enoyl-[ACP] + H2O. In terms of biological role, involved in unsaturated fatty acids biosynthesis. Catalyzes the dehydration of short chain beta-hydroxyacyl-ACPs and long chain saturated and unsaturated beta-hydroxyacyl-ACPs. This chain is 3-hydroxyacyl-[acyl-carrier-protein] dehydratase FabZ, found in Ligilactobacillus salivarius (strain UCC118) (Lactobacillus salivarius).